Consider the following 681-residue polypeptide: PTS system glucose-specific EIICBA component (681 aa).

In terms of domain architecture, PTS EIIC type-1 spans 3–414; that stretch reads KKLFGQLQRI…LKYKTPGRED (412 aa). A run of 10 helical transmembrane segments spans residues 16-36, 73-93, 126-146, 170-190, 199-219, 273-293, 303-323, 328-348, 355-375, and 383-403; these read LMLPVAILPAAGLLLAIGTAM, MIFALGVAIGLAGGDGVAAIA, ILGIPTLQTGVFGGIIIGALA, FVPIMMATTSFILAFPMALIW, AFSTGLLDSNTGVAVFLFGFI, FMQGEFPVMMFGLPAAALAIY, VVAGLMGSAALTSFLTGITEP, FLFVAPLLFFIHAVLDGLSFL, LHLGYTFSGGFIDYFLLGILP, and VIPVGLVYAVIYYFVFRFLIV. The PTS EIIB type-1 domain occupies 425–506; sequence TELPYAVLEA…QQIMNGQVVE (82 aa). The Phosphocysteine intermediate; for EIIB activity role is filled by cysteine 447. The region spanning 551 to 655 is the PTS EIIA type-1 domain; that stretch reads DQVFSEKMMG…SDITPIIVTQ (105 aa). Histidine 603 functions as the Tele-phosphohistidine intermediate; for EIIA activity in the catalytic mechanism.

The protein resides in the cell membrane. It catalyses the reaction N(pros)-phospho-L-histidyl-[protein] + D-glucose(out) = D-glucose 6-phosphate(in) + L-histidyl-[protein]. In terms of biological role, the phosphoenolpyruvate-dependent sugar phosphotransferase system (sugar PTS), a major carbohydrate active transport system, catalyzes the phosphorylation of incoming sugar substrates concomitantly with their translocation across the cell membrane. This system is involved in glucose transport. The chain is PTS system glucose-specific EIICBA component (ptsG) from Staphylococcus aureus (strain NCTC 8325 / PS 47).